The sequence spans 1607 residues: Dicer-like protein 1 (1607 aa).

Positions 1–74 (MNAEMREGSS…PDTKKWIVND (74 aa)) are disordered. The region spanning 142-324 (LFERAKTQNT…IARSPELEGL (183 aa)) is the Helicase ATP-binding domain. Position 155-162 (155-162 (LDTGSGKT)) interacts with ATP. The DEAH box motif lies at 267–270 (DEAH). A Helicase C-terminal domain is found at 461 to 632 (KVVILLRILR…EALPADRKLT (172 aa)). The Dicer dsRNA-binding fold domain occupies 665–755 (SLICLAAFVA…RPTFTKQLPA (91 aa)). A PAZ domain is found at 905–1040 (GAVTFVRDNE…IVLEPLRISP (136 aa)). RNase III domains follow at residues 1063–1219 (LVAL…LTAQ) and 1272–1447 (AARF…VDSR). Residues Glu-1312, Asp-1433, and Glu-1436 each coordinate Mg(2+). Positions 1478–1556 (HPVTFLAGIM…AKKAIQVLEG (79 aa)) constitute a DRBM domain. Residues Cys-1493, His-1527, Cys-1568, and Cys-1570 each contribute to the Zn(2+) site.

The protein belongs to the helicase family. Dicer subfamily. The cofactor is Mg(2+). Mn(2+) is required as a cofactor.

Its function is as follows. Dicer-like endonuclease involved in cleaving double-stranded RNA in the RNA interference (RNAi) pathway. Produces 21 to 25 bp dsRNAs (siRNAs) which target the selective destruction of homologous RNAs leading to sequence-specific suppression of gene expression, called post-transcriptional gene silencing (PTGS). Part of a broad host defense response against viral infection and transposons. This is Dicer-like protein 1 (DCL1) from Chaetomium globosum (strain ATCC 6205 / CBS 148.51 / DSM 1962 / NBRC 6347 / NRRL 1970) (Soil fungus).